Here is a 305-residue protein sequence, read N- to C-terminus: Small ribosomal subunit biogenesis GTPase RsgA (305 aa).

The CP-type G domain maps to 67 to 224 (SSELVRPAVA…VADTPGFSSF (158 aa)). GTP contacts are provided by residues 116–119 (NKID) and 166–174 (GQSGVGKST). Zn(2+)-binding residues include Cys248, Cys253, His255, and Cys261.

Belongs to the TRAFAC class YlqF/YawG GTPase family. RsgA subfamily. Monomer. Associates with 30S ribosomal subunit, binds 16S rRNA. It depends on Zn(2+) as a cofactor.

The protein resides in the cytoplasm. One of several proteins that assist in the late maturation steps of the functional core of the 30S ribosomal subunit. Helps release RbfA from mature subunits. May play a role in the assembly of ribosomal proteins into the subunit. Circularly permuted GTPase that catalyzes slow GTP hydrolysis, GTPase activity is stimulated by the 30S ribosomal subunit. The polypeptide is Small ribosomal subunit biogenesis GTPase RsgA (Ruminiclostridium cellulolyticum (strain ATCC 35319 / DSM 5812 / JCM 6584 / H10) (Clostridium cellulolyticum)).